Consider the following 758-residue polypeptide: Translation initiation factor IF-2 (758 aa).

The segment at 55 to 168 is disordered; it reads EKNVGKQATQ…KTHQPSIPVK (114 aa). 2 stretches are compositionally biased toward polar residues: residues 60–78 and 86–95; these read KQATQNISQKSQSNGQQNH and QRQQSATSKP. Over residues 96 to 136 the composition is skewed to low complexity; that stretch reads KVNNQQHSNSSNEKSKNTKGNQNRNMTQNNNNNNNNNNNNR. The tr-type G domain occupies 259 to 428; sequence ERPPVVTIMG…LLVAEVGELK (170 aa). The segment at 268–275 is G1; the sequence is GHVDHGKT. Residue 268-275 coordinates GTP; the sequence is GHVDHGKT. Residues 293 to 297 are G2; it reads GITQH. Positions 314–317 are G3; it reads DTPG. Residues 314–318 and 368–371 each bind GTP; these read DTPGH and NKMD. The segment at 368 to 371 is G4; the sequence is NKMD. The interval 404 to 406 is G5; sequence SAL.

This sequence belongs to the TRAFAC class translation factor GTPase superfamily. Classic translation factor GTPase family. IF-2 subfamily.

The protein resides in the cytoplasm. One of the essential components for the initiation of protein synthesis. Protects formylmethionyl-tRNA from spontaneous hydrolysis and promotes its binding to the 30S ribosomal subunits. Also involved in the hydrolysis of GTP during the formation of the 70S ribosomal complex. This is Translation initiation factor IF-2 from Lysinibacillus sphaericus (strain C3-41).